Consider the following 61-residue polypeptide: Bowman-Birk type proteinase inhibitor (61 aa).

7 disulfides stabilise this stretch: Cys-4/Cys-57, Cys-5/Cys-20, Cys-8/Cys-53, Cys-10/Cys-18, Cys-27/Cys-34, Cys-31/Cys-46, and Cys-36/Cys-44.

The protein belongs to the Bowman-Birk serine protease inhibitor family.

Functionally, strong inhibitor of trypsin with a 1:1 stoichiometry. Weaker inhibitor of chymotrypsin. The polypeptide is Bowman-Birk type proteinase inhibitor (Erythrina variegata (Indian coral tree)).